The following is a 139-amino-acid chain: Large ribosomal subunit protein uL13 (139 aa).

Belongs to the universal ribosomal protein uL13 family. As to quaternary structure, part of the 50S ribosomal subunit.

This protein is one of the early assembly proteins of the 50S ribosomal subunit, although it is not seen to bind rRNA by itself. It is important during the early stages of 50S assembly. The protein is Large ribosomal subunit protein uL13 of Nitratiruptor sp. (strain SB155-2).